A 425-amino-acid chain; its full sequence is Histidinol dehydrogenase (425 aa).

3 residues coordinate substrate: Ser231, Gln253, and His256. 2 residues coordinate Zn(2+): Gln253 and His256. Residues Glu321 and His322 each act as proton acceptor in the active site. Residues His322, Asp355, Glu409, and His414 each coordinate substrate. Zn(2+) is bound at residue Asp355. His414 contacts Zn(2+).

The protein belongs to the histidinol dehydrogenase family. The cofactor is Zn(2+).

It catalyses the reaction L-histidinol + 2 NAD(+) + H2O = L-histidine + 2 NADH + 3 H(+). It participates in amino-acid biosynthesis; L-histidine biosynthesis; L-histidine from 5-phospho-alpha-D-ribose 1-diphosphate: step 9/9. Its function is as follows. Catalyzes the sequential NAD-dependent oxidations of L-histidinol to L-histidinaldehyde and then to L-histidine. In Carboxydothermus hydrogenoformans (strain ATCC BAA-161 / DSM 6008 / Z-2901), this protein is Histidinol dehydrogenase.